A 68-amino-acid polypeptide reads, in one-letter code: Conotoxin VnMMSK-01 (68 aa).

The N-terminal stretch at 1 to 20 (MMSKLGVLLTICLLLFPLTA) is a signal peptide. Positions 21–50 (VPMDGDQPADLPALRTQDFEPERSPWFDPV) are excised as a propeptide. 3 disulfides stabilise this stretch: cysteine 53–cysteine 65, cysteine 54–cysteine 61, and cysteine 58–cysteine 64. A 4-hydroxyproline modification is found at proline 63.

This sequence belongs to the conotoxin M superfamily. In terms of tissue distribution, expressed by the venom duct.

It localises to the secreted. In Conus ventricosus (Mediterranean cone), this protein is Conotoxin VnMMSK-01.